We begin with the raw amino-acid sequence, 385 residues long: DNA double-strand break repair protein Mre11 (385 aa).

Positions 14, 16, and 58 each coordinate Mn(2+). His-94 serves as the catalytic Proton donor. Positions 180, 216, and 218 each coordinate Mn(2+).

The protein belongs to the MRE11/RAD32 family. Homodimer. Forms a heterotetramer composed of two Mre11 subunits and two Rad50 subunits. Homodimerization facilitates DNA binding. It depends on Mn(2+) as a cofactor.

With respect to regulation, nuclease activity is regulated by Rad50. The mirin-derivative PFM39, specifically inhibits the 3'-5' exonuclease activity. The N-alkylated mirin-derivatives PFM03 and PFM01 specifically inhibit the endonuclease activity. Its function is as follows. Part of the Rad50/Mre11 complex, which is involved in the early steps of DNA double-strand break (DSB) repair. The complex may facilitate opening of the processed DNA ends to aid in the recruitment of HerA and NurA. Mre11 binds to DSB ends and has both double-stranded 3'-5' exonuclease activity and single-stranded endonuclease activity. The chain is DNA double-strand break repair protein Mre11 from Thermotoga maritima (strain ATCC 43589 / DSM 3109 / JCM 10099 / NBRC 100826 / MSB8).